Here is a 333-residue protein sequence, read N- to C-terminus: Phosphate acyltransferase (333 aa).

Belongs to the PlsX family. As to quaternary structure, homodimer. Probably interacts with PlsY.

The protein localises to the cytoplasm. It carries out the reaction a fatty acyl-[ACP] + phosphate = an acyl phosphate + holo-[ACP]. It participates in lipid metabolism; phospholipid metabolism. Its function is as follows. Catalyzes the reversible formation of acyl-phosphate (acyl-PO(4)) from acyl-[acyl-carrier-protein] (acyl-ACP). This enzyme utilizes acyl-ACP as fatty acyl donor, but not acyl-CoA. The chain is Phosphate acyltransferase from Clostridium beijerinckii (strain ATCC 51743 / NCIMB 8052) (Clostridium acetobutylicum).